Consider the following 1225-residue polypeptide: Clustered mitochondria protein homolog (1225 aa).

The tract at residues 1–22 is disordered; it reads MAQTNGEMEHSKESPEQITNGN. Residues 281–532 form the Clu domain; it reads QESNNQKDLL…RVTPLDVAWN (252 aa). Disordered stretches follow at residues 577–605 and 846–878; these read EEAA…EALD and ANGV…SAAA. TPR repeat units lie at residues 949–982, 991–1024, and 1033–1066; these read AKLY…TERT, ILSY…WKII, and ITTM…CESL. Polar residues predominate over residues 1153–1184; sequence RTTLGTQIQPQVGQSTADVSAPSQASNSSIDS. Positions 1153 to 1225 are disordered; sequence RTTLGTQIQP…KLRGSKKSSA (73 aa).

The protein belongs to the CLU family. In terms of assembly, may associate with the eukaryotic translation initiation factor 3 (eIF-3) complex.

The protein localises to the cytoplasm. Its function is as follows. mRNA-binding protein involved in proper cytoplasmic distribution of mitochondria. The chain is Clustered mitochondria protein homolog from Emericella nidulans (strain FGSC A4 / ATCC 38163 / CBS 112.46 / NRRL 194 / M139) (Aspergillus nidulans).